The chain runs to 438 residues: Minor myo-inositol transporter IolF (438 aa).

12 consecutive transmembrane segments (helical) span residues 15–35 (IAAA…SAGL), 49–69 (IGLL…ALLG), 86–106 (MLVY…PMLL), 108–128 (GYII…TIIA), 147–167 (WAAG…LGLL), 171–191 (IVFA…IRLP), 230–250 (ILFL…MGFF), 268–288 (LLQM…FMPF), 295–312 (TVFG…TLFL), 317–334 (GLPI…NNGA), 359–379 (LMFF…PMII), and 387–407 (MAAI…LFAP).

The protein belongs to the major facilitator superfamily. Sugar transporter (TC 2.A.1.1) family.

It is found in the cell membrane. The protein operates within polyol metabolism; myo-inositol degradation into acetyl-CoA. Minor myo-inositol uptake transporter. In Bacillus subtilis (strain 168), this protein is Minor myo-inositol transporter IolF (iolF).